Consider the following 371-residue polypeptide: Queuine tRNA-ribosyltransferase (371 aa).

The active-site Proton acceptor is D90. Substrate contacts are provided by residues D90–F94, D144, Q189, and G215. The segment at G246–N252 is RNA binding. The active-site Nucleophile is D265. Positions T270–R274 are RNA binding; important for wobble base 34 recognition. Residues C303, C305, C308, and H334 each contribute to the Zn(2+) site.

Belongs to the queuine tRNA-ribosyltransferase family. In terms of assembly, homodimer. Within each dimer, one monomer is responsible for RNA recognition and catalysis, while the other monomer binds to the replacement base PreQ1. Zn(2+) serves as cofactor.

The catalysed reaction is 7-aminomethyl-7-carbaguanine + guanosine(34) in tRNA = 7-aminomethyl-7-carbaguanosine(34) in tRNA + guanine. It participates in tRNA modification; tRNA-queuosine biosynthesis. In terms of biological role, catalyzes the base-exchange of a guanine (G) residue with the queuine precursor 7-aminomethyl-7-deazaguanine (PreQ1) at position 34 (anticodon wobble position) in tRNAs with GU(N) anticodons (tRNA-Asp, -Asn, -His and -Tyr). Catalysis occurs through a double-displacement mechanism. The nucleophile active site attacks the C1' of nucleotide 34 to detach the guanine base from the RNA, forming a covalent enzyme-RNA intermediate. The proton acceptor active site deprotonates the incoming PreQ1, allowing a nucleophilic attack on the C1' of the ribose to form the product. After dissociation, two additional enzymatic reactions on the tRNA convert PreQ1 to queuine (Q), resulting in the hypermodified nucleoside queuosine (7-(((4,5-cis-dihydroxy-2-cyclopenten-1-yl)amino)methyl)-7-deazaguanosine). This chain is Queuine tRNA-ribosyltransferase, found in Helicobacter pylori (strain J99 / ATCC 700824) (Campylobacter pylori J99).